The primary structure comprises 193 residues: RNA polymerase sigma-H factor (193 aa).

Residues 49-62 carry the Polymerase core binding motif; that stretch reads DVAQEAFIKAYRAL. Residues 157–176 constitute a DNA-binding region (H-T-H motif); the sequence is YEDIATVMQCPVGTVRSRIF.

Belongs to the sigma-70 factor family. ECF subfamily.

Its function is as follows. Sigma factors are initiation factors that promote the attachment of RNA polymerase to specific initiation sites and are then released. This sigma factor regulates genes such as algD, involved in alginate biosynthesis. This chain is RNA polymerase sigma-H factor (algU), found in Pseudomonas aeruginosa (strain ATCC 15692 / DSM 22644 / CIP 104116 / JCM 14847 / LMG 12228 / 1C / PRS 101 / PAO1).